A 1192-amino-acid polypeptide reads, in one-letter code: DNA topoisomerase 2 (1192 aa).

Residues Asn64, Asn95, and 142 to 149 contribute to the ATP site; that span reads GTNGVGLK. Mg(2+) is bound by residues Glu438, Asp539, and Asp541. Residues 707 to 1174 enclose the Topo IIA-type catalytic domain; that stretch reads IPNFLDGMTR…PGASVWLEEI (468 aa). Residue Tyr800 is the O-(5'-phospho-DNA)-tyrosine intermediate of the active site.

This sequence belongs to the type II topoisomerase family. Mg(2+) serves as cofactor. Requires Mn(2+) as cofactor. The cofactor is Ca(2+).

The protein localises to the host cytoplasm. It catalyses the reaction ATP-dependent breakage, passage and rejoining of double-stranded DNA.. In terms of biological role, type II topoisomerase. Processively relaxes supercoiled DNA. Displays DNA-supercoiling activity only when associated with the viral histone-like protein. The chain is DNA topoisomerase 2 from Ornithodoros (relapsing fever ticks).